The primary structure comprises 179 residues: Large ribosomal subunit protein uL5 (179 aa).

The protein belongs to the universal ribosomal protein uL5 family. In terms of assembly, part of the 50S ribosomal subunit; part of the 5S rRNA/L5/L18/L25 subcomplex. Contacts the 5S rRNA and the P site tRNA. Forms a bridge to the 30S subunit in the 70S ribosome.

Its function is as follows. This is one of the proteins that bind and probably mediate the attachment of the 5S RNA into the large ribosomal subunit, where it forms part of the central protuberance. In the 70S ribosome it contacts protein S13 of the 30S subunit (bridge B1b), connecting the 2 subunits; this bridge is implicated in subunit movement. Contacts the P site tRNA; the 5S rRNA and some of its associated proteins might help stabilize positioning of ribosome-bound tRNAs. The chain is Large ribosomal subunit protein uL5 from Ruthia magnifica subsp. Calyptogena magnifica.